Consider the following 328-residue polypeptide: Thiamine thiazole synthase (328 aa).

Substrate-binding positions include Ala-87, 108-109, Gly-116, and Val-181; that span reads EA. At Cys-215 the chain carries 2,3-didehydroalanine (Cys). Substrate contacts are provided by residues Asp-217, His-232, Met-284, and 294–296; that span reads RMG.

The protein belongs to the THI4 family. Homooctamer. Fe cation serves as cofactor. During the catalytic reaction, a sulfide is transferred from Cys-215 to a reaction intermediate, generating a dehydroalanine residue.

The protein localises to the cytoplasm. It is found in the nucleus. It catalyses the reaction [ADP-thiazole synthase]-L-cysteine + glycine + NAD(+) = [ADP-thiazole synthase]-dehydroalanine + ADP-5-ethyl-4-methylthiazole-2-carboxylate + nicotinamide + 3 H2O + 2 H(+). Its function is as follows. Involved in biosynthesis of the thiamine precursor thiazole. Catalyzes the conversion of NAD and glycine to adenosine diphosphate 5-(2-hydroxyethyl)-4-methylthiazole-2-carboxylic acid (ADT), an adenylated thiazole intermediate. The reaction includes an iron-dependent sulfide transfer from a conserved cysteine residue of the protein to a thiazole intermediate. The enzyme can only undergo a single turnover, which suggests it is a suicide enzyme. May have additional roles in adaptation to various stress conditions and in DNA damage tolerance. This is Thiamine thiazole synthase (thi2) from Schizosaccharomyces pombe (strain 972 / ATCC 24843) (Fission yeast).